A 288-amino-acid polypeptide reads, in one-letter code: 4-hydroxybenzoate octaprenyltransferase (288 aa).

The next 6 membrane-spanning stretches (helical) occupy residues 20–40 (IGTL…AGGL), 43–63 (LKVF…GCII), 96–116 (LFVV…PLVV), 210–230 (QIIG…GMVA), 234–254 (AIYA…QKLI), and 262–282 (CFTA…ALML).

It belongs to the UbiA prenyltransferase family. Requires Mg(2+) as cofactor.

It is found in the cell inner membrane. It carries out the reaction all-trans-octaprenyl diphosphate + 4-hydroxybenzoate = 4-hydroxy-3-(all-trans-octaprenyl)benzoate + diphosphate. It participates in cofactor biosynthesis; ubiquinone biosynthesis. Functionally, catalyzes the prenylation of para-hydroxybenzoate (PHB) with an all-trans polyprenyl group. Mediates the second step in the final reaction sequence of ubiquinone-8 (UQ-8) biosynthesis, which is the condensation of the polyisoprenoid side chain with PHB, generating the first membrane-bound Q intermediate 3-octaprenyl-4-hydroxybenzoate. This is 4-hydroxybenzoate octaprenyltransferase from Shewanella pealeana (strain ATCC 700345 / ANG-SQ1).